The chain runs to 600 residues: MALNLLSSLPAACNFTRLSLPLSSKVNGFVPPITQVQYPMAASTSSIKPVDQTIIRRSADYGPTIWSFDYIQSLDSKYKGESYARQLEKLKEQVSAMLQQDNKVVDLDPLHQLELIDNLHRLGVSYHFEDEIKRTLDRIHNKNTNKSLYARALKFRILRQYGYKTPVKETFSRFMDEKGSFKLSSHSDECKGMLALYEAAYLLVEEESSIFRDAIRFTTAYLKEWVAKHDIDKNDNEYLCTLVKHALELPLHWRMRRLEARWFIDVYESGPDMNPILLELAKVDYNIVQAVHQEDLKYVSRWWKKTGLGEKLNFARDRVVENFFWTVGDIFEPQFGYCRRMSAMVNCLLTSIDDVYDVYGTLDELELFTDAVERWDATTTEQLPYYMKLCFHALYNSVNEMGFIALRDQEVGMIIPYLKKAWADQCKSYLVEAKWYNSGYIPTLQEYMENAWISVTAPVMLLHAYAFTANPITKEALEFLQDSPDIIRISSMIVRLEDDLGTSSDELKRGDVPKSIQCYMHETGVSEDEAREHIRDLIAETWMKMNSARFGNPPYLPDVFIGIAMNLVRMSQCMYLYGDGHGVQENTKDRVLSLFIDPIP.

Residues 1–40 (MALNLLSSLPAACNFTRLSLPLSSKVNGFVPPITQVQYPM) constitute a chloroplast transit peptide. Asp-353, Asp-357, Asp-498, and Glu-506 together coordinate Mg(2+). The DDXXD motif motif lies at 353–357 (DDVYD).

The protein belongs to the terpene synthase family. Requires Mn(2+) as cofactor. The cofactor is Mg(2+).

The protein resides in the plastid. Its subcellular location is the chloroplast. It carries out the reaction (2E)-geranyl diphosphate = gamma-terpinene + diphosphate. The protein operates within secondary metabolite biosynthesis; terpenoid biosynthesis. Inhibited by 100 mM KCl. Monoterpene synthase which catalyzes the conversion of geranyl diphosphate to gamma-terpinene and the minor products limonene, alpha-pinene, beta-pinene, alpha-terpinolene, alpha-thujene, alpha-terpinene, myrcene and sabinene. In Citrus limon (Lemon), this protein is Gamma-terpinene synthase, chloroplastic.